The sequence spans 90 residues: Large ribosomal subunit protein bL27 (90 aa).

Residues 1–21 (MAHTKAGGTTRNSRDSAGRRL) are disordered.

Belongs to the bacterial ribosomal protein bL27 family.

The polypeptide is Large ribosomal subunit protein bL27 (Metamycoplasma arthritidis (strain 158L3-1) (Mycoplasma arthritidis)).